The following is a 234-amino-acid chain: Glucosamine-6-phosphate deaminase (234 aa).

Aspartate 63 functions as the Proton acceptor; for enolization step in the catalytic mechanism. The For ring-opening step role is filled by asparagine 129. Histidine 131 acts as the Proton acceptor; for ring-opening step in catalysis. Catalysis depends on glutamate 136, which acts as the For ring-opening step.

This sequence belongs to the glucosamine/galactosamine-6-phosphate isomerase family. NagB subfamily.

The enzyme catalyses alpha-D-glucosamine 6-phosphate + H2O = beta-D-fructose 6-phosphate + NH4(+). The protein operates within amino-sugar metabolism; N-acetylneuraminate degradation; D-fructose 6-phosphate from N-acetylneuraminate: step 5/5. Functionally, catalyzes the reversible isomerization-deamination of glucosamine 6-phosphate (GlcN6P) to form fructose 6-phosphate (Fru6P) and ammonium ion. This is Glucosamine-6-phosphate deaminase from Listeria welshimeri serovar 6b (strain ATCC 35897 / DSM 20650 / CCUG 15529 / CIP 8149 / NCTC 11857 / SLCC 5334 / V8).